Here is a 312-residue protein sequence, read N- to C-terminus: Polyhedral envelope protein (312 aa).

The protein belongs to the baculoviridae PE family.

It localises to the virion membrane. Major component of the polyhedra envelope. The chain is Polyhedral envelope protein from Lymantria dispar multicapsid nuclear polyhedrosis virus (LdMNPV).